The primary structure comprises 179 residues: Large ribosomal subunit protein uL5 (179 aa).

This sequence belongs to the universal ribosomal protein uL5 family. Part of the 50S ribosomal subunit; part of the 5S rRNA/L5/L18/L25 subcomplex. Contacts the 5S rRNA and the P site tRNA. Forms a bridge to the 30S subunit in the 70S ribosome.

Its function is as follows. This is one of the proteins that bind and probably mediate the attachment of the 5S RNA into the large ribosomal subunit, where it forms part of the central protuberance. In the 70S ribosome it contacts protein S13 of the 30S subunit (bridge B1b), connecting the 2 subunits; this bridge is implicated in subunit movement. Contacts the P site tRNA; the 5S rRNA and some of its associated proteins might help stabilize positioning of ribosome-bound tRNAs. The protein is Large ribosomal subunit protein uL5 of Burkholderia ambifaria (strain MC40-6).